The primary structure comprises 34 residues: Photosystem II reaction center protein M (34 aa).

A helical membrane pass occupies residues 7–27 (GFVASLLFILVPAIFLIVLYI).

Belongs to the PsbM family. In terms of assembly, PSII is composed of 1 copy each of membrane proteins PsbA, PsbB, PsbC, PsbD, PsbE, PsbF, PsbH, PsbI, PsbJ, PsbK, PsbL, PsbM, PsbT, PsbX, PsbY, PsbZ, Psb30/Ycf12, peripheral proteins PsbO, CyanoQ (PsbQ), PsbU, PsbV and a large number of cofactors. It forms dimeric complexes.

The protein localises to the cellular thylakoid membrane. One of the components of the core complex of photosystem II (PSII). PSII is a light-driven water:plastoquinone oxidoreductase that uses light energy to abstract electrons from H(2)O, generating O(2) and a proton gradient subsequently used for ATP formation. It consists of a core antenna complex that captures photons, and an electron transfer chain that converts photonic excitation into a charge separation. This subunit is found at the monomer-monomer interface. This chain is Photosystem II reaction center protein M, found in Parasynechococcus marenigrum (strain WH8102).